We begin with the raw amino-acid sequence, 756 residues long: ATP-dependent 6-phosphofructokinase 2 (756 aa).

The N-terminal catalytic PFK domain 1 stretch occupies residues 1–393 (MEQKFKKGKD…KQTYLNFVSI (393 aa)). ATP is bound by residues Gly-20, 81–82 (RC), and 111–114 (GDGS). Residue Asp-112 coordinates Mg(2+). Residues 157–159 (SID), Arg-194, 201–203 (MGR), Glu-257, Arg-285, and 291–294 (HLQR) each bind substrate. Asp-159 functions as the Proton acceptor in the catalytic mechanism. The interdomain linker stretch occupies residues 394–404 (PLSTTMPSRTK). Residues 405–756 (TFAVVHIGSP…KKPQEAVLSS (352 aa)) are C-terminal regulatory PFK domain 2. Beta-D-fructose 2,6-bisphosphate-binding positions include Arg-474, 530–534 (TISNN), 575–577 (MGS), Glu-632, Arg-658, and 664–667 (YSQL).

This sequence belongs to the phosphofructokinase type A (PFKA) family. ATP-dependent PFK group I subfamily. Eukaryotic two domain clade 'E' sub-subfamily. In terms of assembly, homotetramer. It depends on Mg(2+) as a cofactor.

It localises to the cytoplasm. It catalyses the reaction beta-D-fructose 6-phosphate + ATP = beta-D-fructose 1,6-bisphosphate + ADP + H(+). It participates in carbohydrate degradation; glycolysis; D-glyceraldehyde 3-phosphate and glycerone phosphate from D-glucose: step 3/4. Allosterically activated by ADP, AMP, or fructose 2,6-bisphosphate, and allosterically inhibited by ATP or citrate. In terms of biological role, catalyzes the phosphorylation of D-fructose 6-phosphate to fructose 1,6-bisphosphate by ATP, the first committing step of glycolysis. In Caenorhabditis elegans, this protein is ATP-dependent 6-phosphofructokinase 2.